Here is a 923-residue protein sequence, read N- to C-terminus: MEGAKPTLQLVYQAVQALYHDPDPSGKERASFWLGELQRSVHAWEISDQLLQIRQDVESCYFAAQTMKMKIQTSFYELPTDSHASLRDSLLTHIQNLKDLSPVIVTQLALAIADLALQMPSWKGCVQTLVEKYSNDVTSLPFLLEILTVLPEEVHSRSLRIGANRRTEIIEDLAFYSSTVVSLLMTCVEKAGTDEKMLMKVFRCLGSWFNLGVLDSNFMANNKLLALLFEVLQQDKTSSNLHEAASDCVCSALYAIENVETNLPLAMQLFQGVLTLETAYHMAVAREDLDKVLNYCRIFTELCETFLEKIVCTPGQGLGDLRTLELLLICAGHPQYEVVEISFNFWYRLGEHLYKTNDEVIHGIFKAYIQRLLHALARHCQLEPDHEGVPEETDDFGEFRMRVSDLVKDLIFLIGSMECFAQLYSTLKEGNPPWEVTEAVLFIMAAIAKSVDPENNPTLVEVLEGVVRLPETVHTAVRYTSIELVGEMSEVVDRNPQFLDPVLGYLMKGLCEKPLASAAAKAIHNICSVCRDHMAQHFNGLLEIARSLDSFLLSPEAAVGLLKGTALVLARLPLDKITECLSELCSVQVMALKKLLSQEPSNGISSDPTVFLDRLAVIFRHTNPIVENGQTHPCQKVIQEIWPVLSETLNKHRADNRIVERCCRCLRFAVRCVGKGSAALLQPLVTQMVNVYHVHQHSCFLYLGSILVDEYGMEEGCRQGLLDMLQALCIPTFQLLEQQNGLQNHPDTVDDLFRLATRFIQRSPVTLLRSQVVIPILQWAIASTTLDHRDANCSVMRFLRDLIHTGVANDHEEDFELRKELIGQVMNQLGQQLVSQLLHTCCFCLPPYTLPDVAEVLWEIMQVDRPTFCRWLENSLKGLPKETTVGAVTVTHKQLTDFHKQVTSAEECKQVCWALRDFTRLFR.

Met1 is subject to N-acetylmethionine. Ser74 is subject to Phosphoserine. A Phosphothreonine modification is found at Thr896.

Interacts with (GTP-bound) Ran. Interacts with (phosphorylated) SFRS1 and SFRS2; leading to their nuclear import. Interacts with NUP62. Interacts with RBM4. Interacts with CPSF6, promoting its nuclear import. As to quaternary structure, (Microbial infection) Interacts with the HIV-1 pre-integration complex (PIC), which is composed of viral genome, matrix protein, Vpr and integrase. Interacts with HIV-1 integrase protein; the interaction is direct. In terms of tissue distribution, expressed in skeletal muscle.

It is found in the nucleus envelope. Its subcellular location is the cytoplasm. In terms of biological role, importin, which transports target proteins into the nucleus. Specifically mediates the nuclear import of splicing factor serine/arginine (SR) proteins, such as RBM4, SFRS1 and SFRS2, by recognizing phosphorylated SR domains. Also mediates the nuclear import of serine/arginine (SR) protein CPSF6, independently of CPSF6 phosphorylation. The nuclear import process is regulated by the small GTPase Ran that partitions between cytoplasm and nucleus in the predominantly GDP- and GTP-bound form, respectively. Importin associates with target cargo proteins in the cytoplasm, and the competitive binding of GTP-bound Ran induces the release of cargos in the nucleus. (Microbial infection) Involved in immunodeficiency virus (HIV-1) infection by importing the pre-integration complex (PIC) into the nucleus. Required for a nuclear maturation step of HIV-1 prior to integration. In Homo sapiens (Human), this protein is Transportin-3.